Consider the following 362-residue polypeptide: Peptide chain release factor 1 (362 aa).

Gln237 is modified (N5-methylglutamine).

This sequence belongs to the prokaryotic/mitochondrial release factor family. Post-translationally, methylated by PrmC. Methylation increases the termination efficiency of RF1.

It is found in the cytoplasm. In terms of biological role, peptide chain release factor 1 directs the termination of translation in response to the peptide chain termination codons UAG and UAA. This chain is Peptide chain release factor 1, found in Vibrio vulnificus (strain CMCP6).